We begin with the raw amino-acid sequence, 331 residues long: Protein REVEILLE 6 (331 aa).

The HTH myb-type domain occupies 67 to 121; sequence TITKSRESWTEPEHDKFLEALQLFDRDWKKIEAFIGSKTVIQIRSHAQKYFLKVQ. A DNA-binding region (H-T-H motif) is located at residues 94-117; that stretch reads WKKIEAFIGSKTVIQIRSHAQKYF. Disordered stretches follow at residues 122-166, 203-237, and 309-331; these read KSGT…EPND, LPKAGAGANNNCSSSSENTPRPRSNRDARDHGNVG, and SETATDHGGVNKTLNKDPPEIST. The segment covering 150–165 has biased composition (polar residues); sequence VQLQVPGSFKSTSEPN. Residues 211-220 are compositionally biased toward low complexity; that stretch reads NNNCSSSSEN. Composition is skewed to basic and acidic residues over residues 226–235 and 322–331; these read SNRDARDHGN and LNKDPPEIST.

It is found in the nucleus. Functionally, probable transcription factor. RVE4, RVE6 and RVE8 are components of the circadian system acting synergistically to regulate flowering time, redundantly to regulate leaf growth, and antagonistically to regulate hypocotyl elongation; their action seems independent of ZTL and HY5. This chain is Protein REVEILLE 6, found in Arabidopsis thaliana (Mouse-ear cress).